Consider the following 867-residue polypeptide: Heat shock 70 kDa protein 17 (867 aa).

The signal sequence occupies residues 1-24; it reads MGKIFSWLVVLLSLISLVPVPSES. Composition is skewed to polar residues over residues 560-575 and 587-598; these read TIDS…ATDE and DAENSTASNTTA. 2 disordered regions span residues 560–607 and 829–867; these read TIDS…ASLG and PKPK…HDEL. A compositionally biased stretch (basic and acidic residues) spans 833 to 867; sequence PKIEKVTKTENTTKEEEQSKSSDEAAKEEESHDEL. The Prevents secretion from ER signature appears at 865 to 867; sequence DEL.

It belongs to the heat shock protein 70 (TC 1.A.33) family. HSP110/SSE subfamily.

The protein localises to the endoplasmic reticulum lumen. The protein is Heat shock 70 kDa protein 17 (HSP70-17) of Arabidopsis thaliana (Mouse-ear cress).